The following is a 1235-amino-acid chain: STE20-like serine/threonine-protein kinase (1235 aa).

Ser14 carries the post-translational modification Phosphoserine. The Protein kinase domain maps to 34-292; that stretch reads WEIIGELGDG…TSQLLQHPFV (259 aa). ATP contacts are provided by residues 40–48 and Lys63; that span reads LGDGAFGKV. The active-site Proton acceptor is Asp155. Thr183 is subject to Phosphothreonine. Phosphoserine is present on Ser189. A disordered region spans residues 309–351; sequence AEVTEEVEDGKEEDEEEETENSLPIPASKRASSDLSIASSEED. Positions 312–328 are enriched in acidic residues; that stretch reads TEEVEDGKEEDEEEETE. Ser330, Ser340, Ser341, Ser344, Ser347, Ser348, Ser354, and Ser372 each carry phosphoserine. Disordered stretches follow at residues 363–393 and 421–441; these read VSEK…PEKA and ENER…DQET. A compositionally biased stretch (basic and acidic residues) spans 421–432; sequence ENEREKRPKLEN. Ser518 carries the post-translational modification Phosphoserine. Residues 519-539 are disordered; sequence EVGLTKEDTQEKLGEDDKTQK. Basic and acidic residues predominate over residues 522-539; sequence LTKEDTQEKLGEDDKTQK. A Phosphoserine modification is found at Ser565. Thr569 is modified (phosphothreonine). A phosphoserine mark is found at Ser571, Ser647, Ser655, and Ser667. Residues 613–760 are disordered; sequence EGKNKEQAIN…GTGSTADTSS (148 aa). Residues 638–650 are compositionally biased toward acidic residues; that stretch reads EGEEITESSSTEE. Residues 679 to 695 are compositionally biased toward basic and acidic residues; sequence IDKEKKEIPVSIKKEPE. Over residues 749–760 the composition is skewed to low complexity; that stretch reads DSGTGSTADTSS. A phosphoserine mark is found at Ser777 and Ser779. Position 814 is a phosphothreonine (Thr814). Ser818 is subject to Phosphoserine. Positions 826-1069 form a coiled coil; sequence LRRQELRELR…LKNRQTQERA (244 aa). Residues 875-910 enclose the UVR domain; sequence DQEIENLEKQQKQTIERLEQEHTNRLRDEAKRIKGE. Phosphothreonine is present on Thr1097. Residues 1109–1183 adopt a coiled-coil conformation; the sequence is AAQEEKRQKN…ELKEWREKLR (75 aa).

It belongs to the protein kinase superfamily. STE Ser/Thr protein kinase family. STE20 subfamily. Post-translationally, proteolytically cleaved by caspase-3. Autophosphorylated. In terms of tissue distribution, ubiquitously expressed. Highest expression is found in heart and in skeletal muscle.

The protein localises to the cytoplasm. The enzyme catalyses L-seryl-[protein] + ATP = O-phospho-L-seryl-[protein] + ADP + H(+). It carries out the reaction L-threonyl-[protein] + ATP = O-phospho-L-threonyl-[protein] + ADP + H(+). Mediates apoptosis and actin stress fiber dissolution. This Homo sapiens (Human) protein is STE20-like serine/threonine-protein kinase (SLK).